A 92-amino-acid chain; its full sequence is Small ribosomal subunit protein uS19c (92 aa).

Residues 73-92 form a disordered region; the sequence is EFSPTRTYRGHAKKDKKAKR. Over residues 80–92 the composition is skewed to basic residues; that stretch reads YRGHAKKDKKAKR.

It belongs to the universal ribosomal protein uS19 family.

The protein resides in the plastid. The protein localises to the chloroplast. Functionally, protein S19 forms a complex with S13 that binds strongly to the 16S ribosomal RNA. The protein is Small ribosomal subunit protein uS19c (rps19) of Chlamydomonas reinhardtii (Chlamydomonas smithii).